A 771-amino-acid polypeptide reads, in one-letter code: Choline transporter-like protein 1 (771 aa).

The chain crosses the membrane as a helical span at residues 96-116 (FLFFVFLCGWVVVAGFGIMWG). N-linked (GlcNAc...) asparagine glycans are attached at residues Asn141 and Asn259. The next 4 membrane-spanning stretches (helical) occupy residues 312–332 (WWQT…WTVI), 335–355 (LLGS…LGFG), 392–412 (LVVA…ILFI), and 441–461 (LFPF…AIWL). N-linked (GlcNAc...) asparagine glycosylation occurs at Asn480. Transmembrane regions (helical) follow at residues 514 to 534 (LFAF…ALAG), 566 to 586 (LGSI…RVLL), 603 to 623 (WFLM…KFLT), 662 to 682 (AGIL…ILSF), and 701 to 721 (YYFV…DLFF).

The protein belongs to the CTL (choline transporter-like) family.

The protein localises to the membrane. In Caenorhabditis elegans, this protein is Choline transporter-like protein 1 (chtl-1).